The chain runs to 192 residues: E3 ubiquitin-protein ligase RNF185 (192 aa).

Positions 1-13 (MASKGPSASASTE) are enriched in polar residues. Positions 1–30 (MASKGPSASASTENSNAGGPSGSSNGTGES) are disordered. Residues 1-130 (MASKGPSASA…GGFQGFGFGD (130 aa)) lie on the Cytoplasmic side of the membrane. The segment covering 14–27 (NSNAGGPSGSSNGT) has biased composition (low complexity). The interval 29 to 80 (ESGGQDSTFECNICLDTAKDAVISLCGHLFCWPCLHQWLETRPNRQVCPVCK) is required for ubiquitin ligase activity and protection against ER stress-induced cell death. The RING-type zinc-finger motif lies at 39–80 (CNICLDTAKDAVISLCGHLFCWPCLHQWLETRPNRQVCPVCK). Residues 90 to 123 (PLYGRGSTGQQDPREKTPPRPQGQRPEPENRGGF) are disordered. Residues 131–151 (GGFQMSFGIGAFPFGIFATAF) form a helical membrane-spanning segment. The Mitochondrial intermembrane segment spans residues 152 to 171 (NINDGRPPPAVPGTPQYVDE). The helical transmembrane segment at 172–192 (QFLSRLFLFVALVIMFWLLIA) threads the bilayer.

As to quaternary structure, interacts with ATG5 and BNIP1. In terms of tissue distribution, ubiquitously expressed with high expression in testis.

Its subcellular location is the mitochondrion outer membrane. The protein resides in the endoplasmic reticulum membrane. The catalysed reaction is S-ubiquitinyl-[E2 ubiquitin-conjugating enzyme]-L-cysteine + [acceptor protein]-L-lysine = [E2 ubiquitin-conjugating enzyme]-L-cysteine + N(6)-ubiquitinyl-[acceptor protein]-L-lysine.. The protein operates within protein modification; protein ubiquitination. Functionally, E3 ubiquitin-protein ligase that regulates selective mitochondrial autophagy by mediating 'Lys-63'-linked polyubiquitination of BNIP1. Acts in the endoplasmic reticulum (ER)-associated degradation (ERAD) pathway, which targets misfolded proteins that accumulate in the endoplasmic reticulum (ER) for ubiquitination and subsequent proteasome-mediated degradation. Protects cells from ER stress-induced apoptosis. Responsible for the cotranslational ubiquitination and degradation of CFTR in the ERAD pathway. Also acts as a regulator of the innate antiviral response by catalyzing 'Lys-27'-linked polyubiquitination of CGAS, thereby promoting CGAS cyclic GMP-AMP synthase activity. Preferentially associates with the E2 enzymes UBE2J1 and UBE2J2. The sequence is that of E3 ubiquitin-protein ligase RNF185 (Rnf185) from Mus musculus (Mouse).